A 251-amino-acid chain; its full sequence is Uridylate kinase (251 aa).

Position 11 to 14 (11 to 14) interacts with ATP; that stretch reads KLSG. The tract at residues 19-24 is involved in allosteric activation by GTP; that stretch reads GNQGFG. Glycine 53 contributes to the UMP binding site. ATP-binding residues include glycine 54 and arginine 58. Residues aspartate 73 and 134–141 each bind UMP; that span reads TGNPYFTT. 3 residues coordinate ATP: threonine 161, tyrosine 167, and aspartate 170.

The protein belongs to the UMP kinase family. Homohexamer.

It is found in the cytoplasm. It carries out the reaction UMP + ATP = UDP + ADP. Its pathway is pyrimidine metabolism; CTP biosynthesis via de novo pathway; UDP from UMP (UMPK route): step 1/1. With respect to regulation, allosterically activated by GTP. Inhibited by UTP. In terms of biological role, catalyzes the reversible phosphorylation of UMP to UDP. The sequence is that of Uridylate kinase from Protochlamydia amoebophila (strain UWE25).